The following is a 139-amino-acid chain: Putative nickel-responsive regulator (139 aa).

4 residues coordinate Ni(2+): His-79, His-90, His-92, and Cys-98.

This sequence belongs to the transcriptional regulatory CopG/NikR family. The cofactor is Ni(2+).

Functionally, transcriptional regulator. The chain is Putative nickel-responsive regulator from Pelobacter propionicus (strain DSM 2379 / NBRC 103807 / OttBd1).